A 215-amino-acid chain; its full sequence is Probable phosphoglycerate mutase GpmB (215 aa).

Substrate-binding positions include 8–15 (RHGETQWN), 21–22 (QG), Arg-58, Lys-60, 82–85 (ELDM), 104–105 (RR), and 151–152 (GI). Residue His-9 is the Tele-phosphohistidine intermediate of the active site. Glu-82 serves as the catalytic Proton donor/acceptor.

Belongs to the phosphoglycerate mutase family. GpmB subfamily.

The enzyme catalyses (2R)-2-phosphoglycerate = (2R)-3-phosphoglycerate. The protein operates within carbohydrate degradation; glycolysis; pyruvate from D-glyceraldehyde 3-phosphate: step 3/5. This Salmonella choleraesuis (strain SC-B67) protein is Probable phosphoglycerate mutase GpmB.